Here is a 501-residue protein sequence, read N- to C-terminus: Aspartyl/glutamyl-tRNA(Asn/Gln) amidotransferase subunit B (501 aa).

The segment at 271–299 (VQETRHYQETDGSTSKGRPKETAEDYRYF) is disordered. The segment covering 288–299 (RPKETAEDYRYF) has biased composition (basic and acidic residues).

It belongs to the GatB/GatE family. GatB subfamily. Heterotrimer of A, B and C subunits.

It catalyses the reaction L-glutamyl-tRNA(Gln) + L-glutamine + ATP + H2O = L-glutaminyl-tRNA(Gln) + L-glutamate + ADP + phosphate + H(+). The catalysed reaction is L-aspartyl-tRNA(Asn) + L-glutamine + ATP + H2O = L-asparaginyl-tRNA(Asn) + L-glutamate + ADP + phosphate + 2 H(+). Its function is as follows. Allows the formation of correctly charged Asn-tRNA(Asn) or Gln-tRNA(Gln) through the transamidation of misacylated Asp-tRNA(Asn) or Glu-tRNA(Gln) in organisms which lack either or both of asparaginyl-tRNA or glutaminyl-tRNA synthetases. The reaction takes place in the presence of glutamine and ATP through an activated phospho-Asp-tRNA(Asn) or phospho-Glu-tRNA(Gln). This Corynebacterium diphtheriae (strain ATCC 700971 / NCTC 13129 / Biotype gravis) protein is Aspartyl/glutamyl-tRNA(Asn/Gln) amidotransferase subunit B.